A 921-amino-acid chain; its full sequence is Protein translocase subunit SecA (921 aa).

Residues Gln86, 104-108 (GEGKT), and Asp512 each bind ATP. Residues Cys905, Cys907, Cys916, and His917 each coordinate Zn(2+).

This sequence belongs to the SecA family. In terms of assembly, monomer and homodimer. Part of the essential Sec protein translocation apparatus which comprises SecA, SecYEG and auxiliary proteins SecDF-YajC and YidC. Zn(2+) is required as a cofactor.

It is found in the cell inner membrane. Its subcellular location is the cytoplasm. It catalyses the reaction ATP + H2O + cellular proteinSide 1 = ADP + phosphate + cellular proteinSide 2.. In terms of biological role, part of the Sec protein translocase complex. Interacts with the SecYEG preprotein conducting channel. Has a central role in coupling the hydrolysis of ATP to the transfer of proteins into and across the cell membrane, serving both as a receptor for the preprotein-SecB complex and as an ATP-driven molecular motor driving the stepwise translocation of polypeptide chains across the membrane. This is Protein translocase subunit SecA from Caulobacter sp. (strain K31).